A 246-amino-acid chain; its full sequence is Alpha-amylase inhibitor 1 (246 aa).

The first 23 residues, Met1–Ser23, serve as a signal peptide directing secretion. 3 N-linked (GlcNAc...) asparagine glycosylation sites follow: Asn35, Asn88, and Asn163. The propeptide occupies Ile240–Leu246.

The protein belongs to the leguminous lectin family. Heterodimer of chain 1 and chain 2. In terms of processing, proteolytic processing yields active form.

In terms of biological role, lectin and alpha-amylase inhibitor. Acts as a defensive protein against insects. This Phaseolus vulgaris (Kidney bean) protein is Alpha-amylase inhibitor 1 (LLP).